We begin with the raw amino-acid sequence, 271 residues long: ABC transporter I family member 10 (271 aa).

Residues 40–267 form the ABC transporter domain; the sequence is VECRNLCFSV…IKAKQSSYID (228 aa). 77-84 serves as a coordination point for ATP; the sequence is GPNGCGKS.

This sequence belongs to the ABC transporter superfamily. ABCI family.

This is ABC transporter I family member 10 (ABCI10) from Arabidopsis thaliana (Mouse-ear cress).